The primary structure comprises 424 residues: Arogenate dehydratase 1 (424 aa).

Residues 1 to 52 (MQSLTPSSGVNLKSIIRKTSLPPGQTRFITGRVIKCGYQVDSANTVNTAGAP) constitute a chloroplast transit peptide. The Prephenate dehydratase domain occupies 131–308 (RVAYQGVPGA…NVTRFVMLAR (178 aa)). The ACT domain occupies 321 to 412 (TSIVFAHEGT…SFLRVLGSYP (92 aa)).

In terms of tissue distribution, mostly expressed in flowers, especially in petals (corollas and tubes), and, at low levels, in roots, stems, leaves, pistils, stamens, ovaries and sepals.

It localises to the plastid. The protein localises to the chloroplast stroma. It catalyses the reaction L-arogenate + H(+) = L-phenylalanine + CO2 + H2O. Its pathway is amino-acid biosynthesis; L-phenylalanine biosynthesis; L-phenylalanine from L-arogenate: step 1/1. Functionally, converts L-arogenate produced from the shikimate-chorismate pathway into phenylalanine (Phe). Involved in floral volatile benzenoids and phenylpropanoids (FVBP) production. In Petunia hybrida (Petunia), this protein is Arogenate dehydratase 1.